We begin with the raw amino-acid sequence, 309 residues long: Homoserine kinase (309 aa).

95–105 (PQSRGLGSSAA) contributes to the ATP binding site.

This sequence belongs to the GHMP kinase family. Homoserine kinase subfamily.

The protein localises to the cytoplasm. The catalysed reaction is L-homoserine + ATP = O-phospho-L-homoserine + ADP + H(+). It participates in amino-acid biosynthesis; L-threonine biosynthesis; L-threonine from L-aspartate: step 4/5. Functionally, catalyzes the ATP-dependent phosphorylation of L-homoserine to L-homoserine phosphate. This chain is Homoserine kinase, found in Corynebacterium efficiens (strain DSM 44549 / YS-314 / AJ 12310 / JCM 11189 / NBRC 100395).